Consider the following 311-residue polypeptide: MALPIIIDCDPGHDDAIALVLSLASPELEVKAITSSAGNQTPEKTLRNVLRMLTLLKRPDIPVAGGAVKPLMRELIIADNVHGESGLDGPALPEPSFAPQSGTAVELMAKTLRESSQPVTIVSTGPQTNVALLLNSHPELHTKIARIVIMGGAMGLGNWTPAAEFNIYVDPEAAEIVFQSGIPVVMAGLDVTHKAQIHAADIERFRAIGNPISTIVAELLDFFMEYHKDEKWGFVGAPLHDPCTIAWLLKPEIFTTVERWVGVETQGKYTQGMTVVDYYFLTGNKPNATVMVDVDRQGFVDLLAERLQYYA.

Histidine 240 is an active-site residue.

This sequence belongs to the IUNH family. RihA subfamily.

Functionally, hydrolyzes cytidine or uridine to ribose and cytosine or uracil, respectively. The polypeptide is Pyrimidine-specific ribonucleoside hydrolase RihA (Salmonella dublin (strain CT_02021853)).